The chain runs to 249 residues: 2,3-bisphosphoglycerate-dependent phosphoglycerate mutase (249 aa).

Residues 8-15, 21-22, arginine 60, 87-90, lysine 98, 114-115, and 183-184 contribute to the substrate site; these read RHGESQWN, TG, ERHY, RR, and GN. Histidine 9 (tele-phosphohistidine intermediate) is an active-site residue. Glutamate 87 acts as the Proton donor/acceptor in catalysis.

This sequence belongs to the phosphoglycerate mutase family. BPG-dependent PGAM subfamily.

It carries out the reaction (2R)-2-phosphoglycerate = (2R)-3-phosphoglycerate. Its pathway is carbohydrate degradation; glycolysis; pyruvate from D-glyceraldehyde 3-phosphate: step 3/5. Its function is as follows. Catalyzes the interconversion of 2-phosphoglycerate and 3-phosphoglycerate. The chain is 2,3-bisphosphoglycerate-dependent phosphoglycerate mutase from Pelodictyon phaeoclathratiforme (strain DSM 5477 / BU-1).